We begin with the raw amino-acid sequence, 354 residues long: Adenine deaminase (354 aa).

Zn(2+)-binding residues include H19, H21, and H211. Catalysis depends on E214, which acts as the Proton donor. Residue D291 participates in Zn(2+) binding. D292 is a binding site for substrate.

The protein belongs to the metallo-dependent hydrolases superfamily. Adenosine and AMP deaminases family. Adenine deaminase type 2 subfamily. Zn(2+) is required as a cofactor.

Its subcellular location is the cytoplasm. It localises to the nucleus. It catalyses the reaction adenine + H2O + H(+) = hypoxanthine + NH4(+). Functionally, catalyzes the hydrolytic deamination of adenine to hypoxanthine. Plays an important role in the purine salvage pathway and in nitrogen catabolism. The sequence is that of Adenine deaminase (aah1) from Aspergillus fumigatus (strain ATCC MYA-4609 / CBS 101355 / FGSC A1100 / Af293) (Neosartorya fumigata).